Consider the following 399-residue polypeptide: S-adenosylmethionine synthase (399 aa).

Histidine 17 is an ATP binding site. A Mg(2+)-binding site is contributed by aspartate 19. Residue glutamate 45 participates in K(+) binding. L-methionine is bound by residues glutamate 58 and glutamine 101. Residues 101-111 (QSPDIAQGVDK) are flexible loop. ATP-binding positions include 176–178 (DGK), 243–244 (RF), aspartate 252, 258–259 (RK), and lysine 279. Residue aspartate 252 coordinates L-methionine. Lysine 283 lines the L-methionine pocket.

This sequence belongs to the AdoMet synthase family. As to quaternary structure, homotetramer; dimer of dimers. Mg(2+) is required as a cofactor. The cofactor is K(+).

Its subcellular location is the cytoplasm. It catalyses the reaction L-methionine + ATP + H2O = S-adenosyl-L-methionine + phosphate + diphosphate. The protein operates within amino-acid biosynthesis; S-adenosyl-L-methionine biosynthesis; S-adenosyl-L-methionine from L-methionine: step 1/1. In terms of biological role, catalyzes the formation of S-adenosylmethionine (AdoMet) from methionine and ATP. The overall synthetic reaction is composed of two sequential steps, AdoMet formation and the subsequent tripolyphosphate hydrolysis which occurs prior to release of AdoMet from the enzyme. This is S-adenosylmethionine synthase from Staphylococcus epidermidis (strain ATCC 35984 / DSM 28319 / BCRC 17069 / CCUG 31568 / BM 3577 / RP62A).